A 279-amino-acid polypeptide reads, in one-letter code: Oxygen-dependent coproporphyrinogen-III oxidase (279 aa).

Substrate is bound at residue S102. 2 residues coordinate a divalent metal cation: H106 and H116. The active-site Proton donor is H116. 118–120 (NTR) contributes to the substrate binding site. Positions 149 and 179 each coordinate a divalent metal cation. The segment at 244-279 (YVEFNLLYDRGTKFGLMTDGNVEAILMSLPPEVKFN) is important for dimerization.

It belongs to the aerobic coproporphyrinogen-III oxidase family. As to quaternary structure, homodimer. Requires a divalent metal cation as cofactor.

The protein localises to the cytoplasm. The enzyme catalyses coproporphyrinogen III + O2 + 2 H(+) = protoporphyrinogen IX + 2 CO2 + 2 H2O. The protein operates within porphyrin-containing compound metabolism; protoporphyrin-IX biosynthesis; protoporphyrinogen-IX from coproporphyrinogen-III (O2 route): step 1/1. Involved in the heme biosynthesis. Catalyzes the aerobic oxidative decarboxylation of propionate groups of rings A and B of coproporphyrinogen-III to yield the vinyl groups in protoporphyrinogen-IX. The sequence is that of Oxygen-dependent coproporphyrinogen-III oxidase from Rickettsia felis (strain ATCC VR-1525 / URRWXCal2) (Rickettsia azadi).